A 106-amino-acid chain; its full sequence is Pyrimidine/purine nucleoside phosphorylase (106 aa).

This sequence belongs to the nucleoside phosphorylase PpnP family.

The enzyme catalyses a purine D-ribonucleoside + phosphate = a purine nucleobase + alpha-D-ribose 1-phosphate. The catalysed reaction is adenosine + phosphate = alpha-D-ribose 1-phosphate + adenine. It catalyses the reaction cytidine + phosphate = cytosine + alpha-D-ribose 1-phosphate. It carries out the reaction guanosine + phosphate = alpha-D-ribose 1-phosphate + guanine. The enzyme catalyses inosine + phosphate = alpha-D-ribose 1-phosphate + hypoxanthine. The catalysed reaction is thymidine + phosphate = 2-deoxy-alpha-D-ribose 1-phosphate + thymine. It catalyses the reaction uridine + phosphate = alpha-D-ribose 1-phosphate + uracil. It carries out the reaction xanthosine + phosphate = alpha-D-ribose 1-phosphate + xanthine. Catalyzes the phosphorolysis of diverse nucleosides, yielding D-ribose 1-phosphate and the respective free bases. Can use uridine, adenosine, guanosine, cytidine, thymidine, inosine and xanthosine as substrates. Also catalyzes the reverse reactions. This is Pyrimidine/purine nucleoside phosphorylase from Burkholderia ambifaria (strain ATCC BAA-244 / DSM 16087 / CCUG 44356 / LMG 19182 / AMMD) (Burkholderia cepacia (strain AMMD)).